The following is a 463-amino-acid chain: Asparagine--tRNA ligase (463 aa).

It belongs to the class-II aminoacyl-tRNA synthetase family. In terms of assembly, homodimer.

The protein localises to the cytoplasm. The enzyme catalyses tRNA(Asn) + L-asparagine + ATP = L-asparaginyl-tRNA(Asn) + AMP + diphosphate + H(+). This chain is Asparagine--tRNA ligase, found in Nostoc sp. (strain PCC 7120 / SAG 25.82 / UTEX 2576).